The chain runs to 62 residues: Large ribosomal subunit protein uL30 (62 aa).

Belongs to the universal ribosomal protein uL30 family. In terms of assembly, part of the 50S ribosomal subunit.

The chain is Large ribosomal subunit protein uL30 from Kosmotoga olearia (strain ATCC BAA-1733 / DSM 21960 / TBF 19.5.1).